The primary structure comprises 288 residues: Syntaxin-1A (288 aa).

Basic and acidic residues predominate over residues 1–13 (MKDRTQELRTAKD). Residues 1–20 (MKDRTQELRTAKDSDDDDDV) are disordered. Over 1–265 (MKDRTQELRT…KYQSKARRKK (265 aa)) the chain is Cytoplasmic. Phosphoserine occurs at positions 14, 64, and 95. The stretch at 68–109 (DEKTKEELEELMSDIKKTANKVRSKLKSIEQSIEQEEGLNRS) forms a coiled coil. Ser188 bears the Phosphoserine; by DAPK1 mark. In terms of domain architecture, t-SNARE coiled-coil homology spans 192-254 (LSEIETRHSE…ERAVSDTKKA (63 aa)). Glycyl lysine isopeptide (Lys-Gly) (interchain with G-Cter in SUMO) cross-links involve residues Lys252, Lys253, and Lys256. Residues 266–288 (IMIIICCVILGIIIASTIGGIFG) traverse the membrane as a helical; Anchor for type IV membrane protein segment.

It belongs to the syntaxin family. As to quaternary structure, part of the SNARE core complex containing SNAP25, VAMP2 and STX1A; this complex constitutes the basic catalytic machinery of the complex neurotransmitter release apparatus. The SNARE complex interacts with CPLX1. Interacts with STXBP1. The interaction with STXBP1 promotes assembly of the SNARE complex. Interacts (via C-terminus) with KCNB1 (via C-terminus); the interaction increases in a calcium-dependent manner and induces a pore-independent enhancement of exocytosis in neuroendocrine cells, chromaffin cells, pancreatic beta cells and from the soma of dorsal root ganglia (DRG) neurons. Interacts with SYTL4. Interacts with STXBP6. Interacts with PLCL1 (via C2 domain). Interacts with OTOF. Interacts with LGI3. Interacts (via the H3 domain) with SLC6A4 (via the N-terminus); this interaction regulates SLC4A6 channel conductance in thalamocortical neurons. Interacts with SYT6 and SYT8; the interaction is Ca(2+)-dependent. Interacts with VAMP8. Interacts with SNAP23. Interacts with VAPA and SYBU. Interacts with PRRT2. Interacts with SEPT8. Interacts with STXBP5L. Interacts with synaptotagmin-1/SYT1. Interacts with SEPTIN5; in the cerebellar cortex. Interacts with SEPTIN4; in the striatum. In terms of processing, phosphorylated by CK2. Phosphorylation at Ser-188 by DAPK1 significantly decreases its interaction with STXBP1. Post-translationally, (Microbial infection) Targeted and hydrolyzed by C.botulinum neurotoxin type C (BoNT/C), which hydrolyzes the 253-Lys-|-Ala-254 bond. Cleavage inhibits neurotransmitter release. Phosphorylated by CK2. Phosphorylation at Ser-188 by DAPK1 significantly decreases its interaction with STXBP1. In terms of processing, sumoylated, sumoylation is required for regulation of synaptic vesicle endocytosis. As to expression, expressed predominantly in cerebral cortex, hippocampus, cerebellum, adrenal medulla and retina with weak expression detected in non-neuronal tissues.

Its subcellular location is the cytoplasmic vesicle. It is found in the secretory vesicle. The protein resides in the synaptic vesicle membrane. It localises to the cell membrane. The protein localises to the synapse. Its subcellular location is the synaptosome. Plays an essential role in hormone and neurotransmitter calcium-dependent exocytosis and endocytosis. Part of the SNARE (Soluble NSF Attachment Receptor) complex composed of SNAP25, STX1A and VAMP2 which mediates the fusion of synaptic vesicles with the presynaptic plasma membrane. STX1A and SNAP25 are localized on the plasma membrane while VAMP2 resides in synaptic vesicles. The pairing of the three SNAREs from the N-terminal SNARE motifs to the C-terminal anchors leads to the formation of the SNARE complex, which brings membranes into close proximity and results in final fusion. Participates in the calcium-dependent regulation of acrosomal exocytosis in sperm. Also plays an important role in the exocytosis of hormones such as insulin or glucagon-like peptide 1 (GLP-1). The chain is Syntaxin-1A (Stx1a) from Rattus norvegicus (Rat).